Here is a 349-residue protein sequence, read N- to C-terminus: MADDRKAALDAALKKIEKSYGKGSIMKLGEKIDQQISTIPSGSLALDVALGVGGYPRGRIIEVYGPESSGKTTVALHAIAEVQKNGGTAAFIDAEHALDPQYAQKLGVNIDELLLSQPDTGEQGLEIADALVSSGAVDIVVVDSVAALVPRAEIDGEMGDSHVGLQARLMSQALRKLSGSINKTKTIAIFINQIREKVGVMFGNPEITPGGRALKFYATIRLEVRRAEQLKQGTDIVGNRTKIKVVKNKVAPPFKIAEVDVMYGLGISQEGELLDMAVEKDIVDKSGAWYSYKEDRIGQGRENAKIYMANHPEMMAEVSALVRAAYGIGEEVAVPEDEKGQEELPLVEE.

65–72 (GPESSGKT) is an ATP binding site.

The protein belongs to the RecA family.

The protein localises to the cytoplasm. In terms of biological role, can catalyze the hydrolysis of ATP in the presence of single-stranded DNA, the ATP-dependent uptake of single-stranded DNA by duplex DNA, and the ATP-dependent hybridization of homologous single-stranded DNAs. It interacts with LexA causing its activation and leading to its autocatalytic cleavage. The chain is Protein RecA from Enterococcus faecium (Streptococcus faecium).